Consider the following 279-residue polypeptide: Phosphate import ATP-binding protein PstB 2 (279 aa).

The region spanning 34–274 (FDIENLDLYY…PSDDRTRGYV (241 aa)) is the ABC transporter domain. 66–73 (GPSGCGKS) is a binding site for ATP.

The protein belongs to the ABC transporter superfamily. Phosphate importer (TC 3.A.1.7) family. In terms of assembly, the complex is composed of two ATP-binding proteins (PstB), two transmembrane proteins (PstC and PstA) and a solute-binding protein (PstS).

The protein localises to the cell inner membrane. The catalysed reaction is phosphate(out) + ATP + H2O = ADP + 2 phosphate(in) + H(+). In terms of biological role, part of the ABC transporter complex PstSACB involved in phosphate import. Responsible for energy coupling to the transport system. This Vibrio vulnificus (strain YJ016) protein is Phosphate import ATP-binding protein PstB 2.